The primary structure comprises 258 residues: 3-deoxy-manno-octulosonate cytidylyltransferase (258 aa).

It belongs to the KdsB family.

It localises to the cytoplasm. It catalyses the reaction 3-deoxy-alpha-D-manno-oct-2-ulosonate + CTP = CMP-3-deoxy-beta-D-manno-octulosonate + diphosphate. It functions in the pathway nucleotide-sugar biosynthesis; CMP-3-deoxy-D-manno-octulosonate biosynthesis; CMP-3-deoxy-D-manno-octulosonate from 3-deoxy-D-manno-octulosonate and CTP: step 1/1. Its pathway is bacterial outer membrane biogenesis; lipopolysaccharide biosynthesis. In terms of biological role, activates KDO (a required 8-carbon sugar) for incorporation into bacterial lipopolysaccharide in Gram-negative bacteria. The sequence is that of 3-deoxy-manno-octulosonate cytidylyltransferase from Nitrobacter hamburgensis (strain DSM 10229 / NCIMB 13809 / X14).